A 118-amino-acid polypeptide reads, in one-letter code: Co-chaperonin GroES (118 aa).

Belongs to the GroES chaperonin family. Heptamer of 7 subunits arranged in a ring. Interacts with the chaperonin GroEL.

It is found in the cytoplasm. In terms of biological role, together with the chaperonin GroEL, plays an essential role in assisting protein folding. The GroEL-GroES system forms a nano-cage that allows encapsulation of the non-native substrate proteins and provides a physical environment optimized to promote and accelerate protein folding. GroES binds to the apical surface of the GroEL ring, thereby capping the opening of the GroEL channel. This is Co-chaperonin GroES from Helicobacter acinonychis (strain Sheeba).